The primary structure comprises 267 residues: MEMO1 family protein MA_0601 (267 aa).

Belongs to the MEMO1 family.

This is MEMO1 family protein MA_0601 from Methanosarcina acetivorans (strain ATCC 35395 / DSM 2834 / JCM 12185 / C2A).